Consider the following 216-residue polypeptide: Ribosomal RNA large subunit methyltransferase E (216 aa).

S-adenosyl-L-methionine contacts are provided by glycine 67, tryptophan 69, aspartate 87, aspartate 103, and aspartate 128. The Proton acceptor role is filled by lysine 168.

Belongs to the class I-like SAM-binding methyltransferase superfamily. RNA methyltransferase RlmE family.

The protein localises to the cytoplasm. It carries out the reaction uridine(2552) in 23S rRNA + S-adenosyl-L-methionine = 2'-O-methyluridine(2552) in 23S rRNA + S-adenosyl-L-homocysteine + H(+). In terms of biological role, specifically methylates the uridine in position 2552 of 23S rRNA at the 2'-O position of the ribose in the fully assembled 50S ribosomal subunit. This chain is Ribosomal RNA large subunit methyltransferase E, found in Acinetobacter baumannii (strain AB307-0294).